A 250-amino-acid polypeptide reads, in one-letter code: Probable transcriptional regulatory protein ROP_68700 (250 aa).

Belongs to the TACO1 family.

It localises to the cytoplasm. This Rhodococcus opacus (strain B4) protein is Probable transcriptional regulatory protein ROP_68700.